The primary structure comprises 331 residues: Ornithine carbamoyltransferase (331 aa).

Carbamoyl phosphate-binding positions include 57-60 (STRT), glutamine 82, arginine 106, and 133-136 (HPTQ). L-ornithine-binding positions include asparagine 166, aspartate 230, and 234–235 (SM). Carbamoyl phosphate contacts are provided by residues 272–273 (CL) and arginine 317.

The protein belongs to the aspartate/ornithine carbamoyltransferase superfamily. OTCase family.

The protein resides in the cytoplasm. It carries out the reaction carbamoyl phosphate + L-ornithine = L-citrulline + phosphate + H(+). It functions in the pathway amino-acid degradation; L-arginine degradation via ADI pathway; carbamoyl phosphate from L-arginine: step 2/2. Reversibly catalyzes the transfer of the carbamoyl group from carbamoyl phosphate (CP) to the N(epsilon) atom of ornithine (ORN) to produce L-citrulline. The protein is Ornithine carbamoyltransferase of Clostridium perfringens (strain SM101 / Type A).